The following is a 700-amino-acid chain: Phenoloxidase 8 (700 aa).

The propeptide occupies 1-51; it reads MATLTQKFHGLLQHPLEPLFLPKNDGTLFYDLPERFLTSRYSPIGQNLANR. N-linked (GlcNAc...) asparagine glycans are attached at residues Asn-64 and Asn-198. Cu cation-binding residues include His-223, His-227, and His-252. A glycan (N-linked (GlcNAc...) asparagine) is linked at Asn-295. Glu-364 (proton acceptor) is an active-site residue. The Cu cation site is built by His-379, His-383, and His-419. N-linked (GlcNAc...) asparagine glycans are attached at residues Asn-445, Asn-507, and Asn-565. 2 cysteine pairs are disulfide-bonded: Cys-592–Cys-636 and Cys-594–Cys-643.

It belongs to the tyrosinase family. Homodimer. The cofactor is Cu(2+). Upon activation, a trypsin type protease cleaves prophenol oxidase to yield the active enzyme.

The protein localises to the secreted. It carries out the reaction 2 tyramine + O2 = 2 dopamine. The enzyme catalyses 2 dopamine + O2 = 2 dopamine quinone + 2 H2O. This is a copper-containing oxidase that functions in the formation of pigments such as melanins and other polyphenolic compounds. Catalyzes the oxidation of o-diphenols such as dopamine. Also oxidizes monophenols such as tyramine. This chain is Phenoloxidase 8, found in Anopheles gambiae (African malaria mosquito).